Here is a 900-residue protein sequence, read N- to C-terminus: Translation initiation factor IF-2 (900 aa).

Disordered regions lie at residues 30-77 (GEFV…SLDK) and 89-291 (NGKA…YDSM). Over residues 89–112 (NGKATAAPAKAADSGGAAIVSPTT) the composition is skewed to low complexity. Positions 113–129 (PAAPEPPTAVPPSPQAP) are enriched in pro residues. Residues 175 to 187 (PGTARPGVPRPGA) are compositionally biased toward low complexity. Gly residues predominate over residues 215 to 271 (GRPGAPGAGRSDAGGGNYRGGGVGAAPGTGFRGRPGGGGGGRPGQRGGAAGAFGRPG). A compositionally biased stretch (basic residues) spans 275–284 (RRGRKSKRQK). One can recognise a tr-type G domain in the interval 396–567 (VRPPVVTVMG…AVLLTADAAL (172 aa)). Residues 405–412 (GHVDHGKT) form a G1 region. GTP is bound at residue 405-412 (GHVDHGKT). The segment at 430 to 434 (GITQH) is G2. The tract at residues 455–458 (DTPG) is G3. Residues 455-459 (DTPGH) and 509-512 (NKID) contribute to the GTP site. Positions 509 to 512 (NKID) are G4. The G5 stretch occupies residues 545-547 (SAK).

It belongs to the TRAFAC class translation factor GTPase superfamily. Classic translation factor GTPase family. IF-2 subfamily.

It localises to the cytoplasm. In terms of biological role, one of the essential components for the initiation of protein synthesis. Protects formylmethionyl-tRNA from spontaneous hydrolysis and promotes its binding to the 30S ribosomal subunits. Also involved in the hydrolysis of GTP during the formation of the 70S ribosomal complex. In Mycobacterium bovis (strain BCG / Pasteur 1173P2), this protein is Translation initiation factor IF-2.